A 389-amino-acid polypeptide reads, in one-letter code: Probable nitrate transporter NarT (389 aa).

The next 12 membrane-spanning stretches (helical) occupy residues 14–34 (TLSL…MPFI), 45–65 (ISII…PFGY), 69–89 (IVGA…PIFF), 97–117 (GMLM…SVGV), 139–159 (GNIG…IIGW), 161–181 (TTVR…FIFG), 211–231 (WYFI…NYLV), 246–266 (GVFI…GDKF), 268–288 (AVKV…ILGI), 294–314 (LFTV…GLIF), 331–351 (IVSM…TYVA), and 353–373 (LTGS…IALF).

The protein belongs to the major facilitator superfamily. Nitrate/nitrite porter (TC 2.A.1.8) family.

The protein resides in the cell membrane. Functionally, probably required for nitrate uptake under anoxic conditions. Also possibly involved in excretion of nitrite produced by the dissimilatory reduction of nitrate. The chain is Probable nitrate transporter NarT (narT) from Staphylococcus aureus (strain MRSA252).